The following is a 369-amino-acid chain: Phenylalanine--tRNA ligase alpha subunit (369 aa).

Glu-269 is a Mg(2+) binding site.

The protein belongs to the class-II aminoacyl-tRNA synthetase family. Phe-tRNA synthetase alpha subunit type 1 subfamily. In terms of assembly, tetramer of two alpha and two beta subunits. Mg(2+) is required as a cofactor.

The protein resides in the cytoplasm. It catalyses the reaction tRNA(Phe) + L-phenylalanine + ATP = L-phenylalanyl-tRNA(Phe) + AMP + diphosphate + H(+). This Brucella melitensis biotype 1 (strain ATCC 23456 / CCUG 17765 / NCTC 10094 / 16M) protein is Phenylalanine--tRNA ligase alpha subunit.